The sequence spans 137 residues: Gonadotropin subunit beta-1 (137 aa).

Residues 1–24 (MYCTHLRMLQLVVMATLWVTPVRA) form the signal peptide. Intrachain disulfides connect Cys-32–Cys-78, Cys-46–Cys-93, Cys-55–Cys-108, Cys-59–Cys-110, and Cys-113–Cys-120. Asn-36 carries an N-linked (GlcNAc...) asparagine glycan.

This sequence belongs to the glycoprotein hormones subunit beta family. In terms of assembly, heterodimer of an alpha and a beta chain.

Its subcellular location is the secreted. Its function is as follows. Involved in gametogenesis and steroidogenesis. The protein is Gonadotropin subunit beta-1 (cgba) of Coregonus autumnalis (Arctic cisco).